The following is a 395-amino-acid chain: Putative nickel insertion protein (395 aa).

The protein belongs to the LarC family.

This Roseiflexus castenholzii (strain DSM 13941 / HLO8) protein is Putative nickel insertion protein.